A 49-amino-acid polypeptide reads, in one-letter code: Sperm protamine P1 (49 aa).

The segment at 1 to 49 is disordered; sequence MARYRCCRSHSRSRCRRRRRRSRRRRRRSCGRRRRAGYRRYTVRYRRRR.

It belongs to the protamine P1 family. In terms of tissue distribution, testis.

Its subcellular location is the nucleus. It is found in the chromosome. In terms of biological role, protamines substitute for histones in the chromatin of sperm during the haploid phase of spermatogenesis. They compact sperm DNA into a highly condensed, stable and inactive complex. In Macronycteris commersonii (Commerson's roundleaf bat), this protein is Sperm protamine P1 (PRM1).